A 339-amino-acid chain; its full sequence is SVP1-like protein 2 (339 aa).

2 WD repeats span residues 177-217 (AHAN…LVRE) and 222-261 (LDRTSIIDMRWSPDGSKLAVVSDKWTLHVFEVFNDAENKR).

It belongs to the WD repeat PROPPIN family.

The protein resides in the vacuole membrane. It is found in the cytoplasmic vesicle membrane. Its function is as follows. Involved in mitochondrial or peroxisomal functions and amino acid signaling pathways. This chain is SVP1-like protein 2 (HSV2), found in Kluyveromyces lactis (strain ATCC 8585 / CBS 2359 / DSM 70799 / NBRC 1267 / NRRL Y-1140 / WM37) (Yeast).